The primary structure comprises 147 residues: Large ribosomal subunit protein uL13 (147 aa).

This sequence belongs to the universal ribosomal protein uL13 family. As to quaternary structure, part of the 50S ribosomal subunit.

Its function is as follows. This protein is one of the early assembly proteins of the 50S ribosomal subunit, although it is not seen to bind rRNA by itself. It is important during the early stages of 50S assembly. This chain is Large ribosomal subunit protein uL13, found in Leuconostoc citreum (strain KM20).